Here is a 96-residue protein sequence, read N- to C-terminus: Aspartyl/glutamyl-tRNA(Asn/Gln) amidotransferase subunit C (96 aa).

Belongs to the GatC family. As to quaternary structure, heterotrimer of A, B and C subunits.

It carries out the reaction L-glutamyl-tRNA(Gln) + L-glutamine + ATP + H2O = L-glutaminyl-tRNA(Gln) + L-glutamate + ADP + phosphate + H(+). The catalysed reaction is L-aspartyl-tRNA(Asn) + L-glutamine + ATP + H2O = L-asparaginyl-tRNA(Asn) + L-glutamate + ADP + phosphate + 2 H(+). In terms of biological role, allows the formation of correctly charged Asn-tRNA(Asn) or Gln-tRNA(Gln) through the transamidation of misacylated Asp-tRNA(Asn) or Glu-tRNA(Gln) in organisms which lack either or both of asparaginyl-tRNA or glutaminyl-tRNA synthetases. The reaction takes place in the presence of glutamine and ATP through an activated phospho-Asp-tRNA(Asn) or phospho-Glu-tRNA(Gln). The protein is Aspartyl/glutamyl-tRNA(Asn/Gln) amidotransferase subunit C of Bacillus cytotoxicus (strain DSM 22905 / CIP 110041 / 391-98 / NVH 391-98).